The primary structure comprises 151 residues: Large ribosomal subunit protein bL17 (151 aa).

The protein belongs to the bacterial ribosomal protein bL17 family. In terms of assembly, part of the 50S ribosomal subunit. Contacts protein L32.

The polypeptide is Large ribosomal subunit protein bL17 (Chlorobium limicola (strain DSM 245 / NBRC 103803 / 6330)).